We begin with the raw amino-acid sequence, 473 residues long: Dol-P-Glc:Glc(2)Man(9)GlcNAc(2)-PP-Dol alpha-1,2-glucosyltransferase (473 aa).

The Cytoplasmic segment spans residues 1 to 6 (MAQLEG). The helical transmembrane segment at 7–27 (YYFSAALSCTFLVSCLLFSAF) threads the bilayer. The Extracellular segment spans residues 28–64 (SRALREPYMDEIFHLPQAQRYCEGHFSLSQWDPMITT). The helical transmembrane segment at 65-85 (LPGLYLVSIGVIKPAIWIFGW) threads the bilayer. Over 86 to 97 (SEHVVCSIGMLR) the chain is Cytoplasmic. A helical membrane pass occupies residues 98–118 (FVNLLFSVGNFYLLYLLFCKV). The Extracellular portion of the chain corresponds to 119–130 (QPRNKAASSIQR). Transmembrane regions (helical) follow at residues 131–151 (VLSTLTLAVFPTLYFFNFLYY) and 152–172 (TEAGSMFFTLFAYLMCLYGNH). The Extracellular portion of the chain corresponds to 173-175 (KTS). Residues 176 to 196 (AFLGFCGFMFRQTNIIWAVFC) form a helical membrane-spanning segment. Residues 197-249 (AGNVIAQKLTEAWKTELQKKEDRLPPIKGPFAEFRKILQFLLAYSMSFKNLSM) are Cytoplasmic-facing. Residues 250 to 270 (LLLLTWPYILLGFLFCAFVVV) form a helical membrane-spanning segment. Residues 271–283 (NGGIVIGDRSSHE) lie on the Extracellular side of the membrane. The helical transmembrane segment at 284 to 304 (ACLHFPQLFYFFSFTLFFSFP) threads the bilayer. Residues 305–323 (HLLSPSKIKTFLSLVWKRR) are Cytoplasmic-facing. Residues 324-344 (ILFFVVTLVSVFLVWKFTYAH) traverse the membrane as a helical segment. At 345–367 (KYLLADNRHYTFYVWKRVFQRYE) the chain is on the extracellular side. The helical transmembrane segment at 368 to 388 (TVKYLLVPAYIFAGWSIADSL) threads the bilayer. At 389 to 392 (KSKS) the chain is on the cytoplasmic side. The helical transmembrane segment at 393-413 (IFWNLMFFICLFTVIVPQKLL) threads the bilayer. At 414–436 (EFRYFILPYVIYRLNIPLPPTSR) the chain is on the extracellular side. Residues 437–457 (LICELSCYAVVNFITFFIFLN) traverse the membrane as a helical segment. Residues 458 to 473 (KTFQWPNSQDIQRFMW) lie on the Cytoplasmic side of the membrane.

Belongs to the ALG10 glucosyltransferase family.

The protein localises to the endoplasmic reticulum membrane. The enzyme catalyses an alpha-D-Glc-(1-&gt;3)-alpha-D-Glc-(1-&gt;3)-alpha-D-Man-(1-&gt;2)-alpha-D-Man-(1-&gt;2)-alpha-D-Man-(1-&gt;3)-[alpha-D-Man-(1-&gt;2)-alpha-D-Man-(1-&gt;3)-[alpha-D-Man-(1-&gt;2)-alpha-D-Man-(1-&gt;6)]-alpha-D-Man-(1-&gt;6)]-beta-D-Man-(1-&gt;4)-beta-D-GlcNAc-(1-&gt;4)-alpha-D-GlcNAc-diphospho-di-trans,poly-cis-dolichol + a di-trans,poly-cis-dolichyl beta-D-glucosyl phosphate = a alpha-D-Glc-(1-&gt;2)-alpha-D-Glc-(1-&gt;3)-alpha-D-Glc-(1-&gt;3)-alpha-D-Man-(1-&gt;2)-alpha-D-Man-(1-&gt;2)-alpha-D-Man-(1-&gt;3)-[alpha-D-Man-(1-&gt;2)-alpha-D-Man-(1-&gt;3)-[alpha-D-Man-(1-&gt;2)-alpha-D-Man-(1-&gt;6)]-alpha-D-Man-(1-&gt;6)]-beta-D-Man-(1-&gt;4)-beta-D-GlcNAc-(1-&gt;4)-alpha-D-GlcNAc-diphospho-di-trans,poly-cis-dolichol + a di-trans,poly-cis-dolichyl phosphate + H(+). The protein operates within protein modification; protein glycosylation. Its function is as follows. Dol-P-Glc:Glc(2)Man(9)GlcNAc(2)-PP-Dol alpha-1,2-glucosyltransferase that operates in the biosynthetic pathway of dolichol-linked oligosaccharides, the glycan precursors employed in protein asparagine (N)-glycosylation. The assembly of dolichol-linked oligosaccharides begins on the cytosolic side of the endoplasmic reticulum membrane and finishes in its lumen. The sequential addition of sugars to dolichol pyrophosphate produces dolichol-linked oligosaccharides containing fourteen sugars, including two GlcNAcs, nine mannoses and three glucoses. Once assembled, the oligosaccharide is transferred from the lipid to nascent proteins by oligosaccharyltransferases. In the lumen of the endoplasmic reticulum, adds the third and last glucose residue from dolichyl phosphate glucose (Dol-P-Glc) onto the lipid-linked oligosaccharide intermediate Glc(2)Man(9)GlcNAc(2)-PP-Dol to produce Glc(3)Man(9)GlcNAc(2)-PP-Dol. The sequence is that of Dol-P-Glc:Glc(2)Man(9)GlcNAc(2)-PP-Dol alpha-1,2-glucosyltransferase from Homo sapiens (Human).